The following is a 229-amino-acid chain: Cytochrome c oxidase subunit 2 (229 aa).

At 1–26 the chain is on the mitochondrial intermembrane side; it reads MANWTQLGLQDASSPLMEELIYFHDY. The chain crosses the membrane as a helical span at residues 27 to 48; sequence TLIILTLITILVFYGLASLLFS. Over 49–62 the chain is Mitochondrial matrix; that stretch reads SNTNRFFLEGQGLE. A helical transmembrane segment spans residues 63–82; sequence TVWTIIPAVILIFIALPSLQ. At 83 to 229 the chain is on the mitochondrial intermembrane side; the sequence is LLYLMDEVNN…ETWVSNFITE (147 aa). Residues histidine 161, cysteine 196, glutamate 198, cysteine 200, histidine 204, and methionine 207 each coordinate Cu cation. Mg(2+) is bound at residue glutamate 198.

The protein belongs to the cytochrome c oxidase subunit 2 family. As to quaternary structure, component of the cytochrome c oxidase (complex IV, CIV), a multisubunit enzyme composed of a catalytic core of 3 subunits and several supernumerary subunits. The complex exists as a monomer or a dimer and forms supercomplexes (SCs) in the inner mitochondrial membrane with ubiquinol-cytochrome c oxidoreductase (cytochrome b-c1 complex, complex III, CIII). Requires Cu cation as cofactor.

The protein resides in the mitochondrion inner membrane. The enzyme catalyses 4 Fe(II)-[cytochrome c] + O2 + 8 H(+)(in) = 4 Fe(III)-[cytochrome c] + 2 H2O + 4 H(+)(out). Its function is as follows. Component of the cytochrome c oxidase, the last enzyme in the mitochondrial electron transport chain which drives oxidative phosphorylation. The respiratory chain contains 3 multisubunit complexes succinate dehydrogenase (complex II, CII), ubiquinol-cytochrome c oxidoreductase (cytochrome b-c1 complex, complex III, CIII) and cytochrome c oxidase (complex IV, CIV), that cooperate to transfer electrons derived from NADH and succinate to molecular oxygen, creating an electrochemical gradient over the inner membrane that drives transmembrane transport and the ATP synthase. Cytochrome c oxidase is the component of the respiratory chain that catalyzes the reduction of oxygen to water. Electrons originating from reduced cytochrome c in the intermembrane space (IMS) are transferred via the dinuclear copper A center (CU(A)) of subunit 2 and heme A of subunit 1 to the active site in subunit 1, a binuclear center (BNC) formed by heme A3 and copper B (CU(B)). The BNC reduces molecular oxygen to 2 water molecules using 4 electrons from cytochrome c in the IMS and 4 protons from the mitochondrial matrix. In Patiria pectinifera (Starfish), this protein is Cytochrome c oxidase subunit 2 (COII).